The following is a 341-amino-acid chain: Phosphoribosylformylglycinamidine cyclo-ligase (341 aa).

This sequence belongs to the AIR synthase family.

The protein localises to the cytoplasm. It catalyses the reaction 2-formamido-N(1)-(5-O-phospho-beta-D-ribosyl)acetamidine + ATP = 5-amino-1-(5-phospho-beta-D-ribosyl)imidazole + ADP + phosphate + H(+). Its pathway is purine metabolism; IMP biosynthesis via de novo pathway; 5-amino-1-(5-phospho-D-ribosyl)imidazole from N(2)-formyl-N(1)-(5-phospho-D-ribosyl)glycinamide: step 2/2. The sequence is that of Phosphoribosylformylglycinamidine cyclo-ligase from Xanthomonas campestris pv. campestris (strain B100).